The sequence spans 243 residues: Small ribosomal subunit protein eS4 (243 aa).

An S4 RNA-binding domain is found at 37–99; the sequence is IPLALLLKHY…SDLYFRIVPD (63 aa).

It belongs to the eukaryotic ribosomal protein eS4 family.

This Sulfurisphaera tokodaii (strain DSM 16993 / JCM 10545 / NBRC 100140 / 7) (Sulfolobus tokodaii) protein is Small ribosomal subunit protein eS4 (rps4e).